Reading from the N-terminus, the 524-residue chain is BEL1-like homeodomain protein 3 (524 aa).

Residues 171–187 (SRYLKPTQQLLDEVVSV) are SR/KY domain. Basic and acidic residues-rich tracts occupy residues 195 to 205 (NKKMKNDKGQD) and 216 to 235 (EDDKSQSQELSPSERQELQS). Residues 195–236 (NKKMKNDKGQDFHNGSSDNITEDDKSQSQELSPSERQELQSK) are disordered. The tract at residues 229–300 (ERQELQSKKS…CLRDAIKEQI (72 aa)) is BELL domain. The segment at residues 346 to 408 (AWRPQRGLPE…NARVRLWKPM (63 aa)) is a DNA-binding region (homeobox). Positions 429–463 (QDTKKMQETSQLKHEDSSSSQQQNQGNNNNNIPYT) are disordered. Residues 430–445 (DTKKMQETSQLKHEDS) show a composition bias toward basic and acidic residues. Positions 446–459 (SSSQQQNQGNNNNN) are enriched in low complexity.

Belongs to the TALE/BELL homeobox family. As to quaternary structure, may form heterodimeric complex with the TALE/KNOX protein STM. Interacts with OFP1, OFP2, OFP3, OFP4, OFP5 and OFP15.

It localises to the nucleus. Its function is as follows. Transcription factor that is responsive of the nuclear import of SHOOT MERISTEMLESS (STM). The polypeptide is BEL1-like homeodomain protein 3 (BLH3) (Arabidopsis thaliana (Mouse-ear cress)).